Here is a 122-residue protein sequence, read N- to C-terminus: Large ribosomal subunit protein bL12 (122 aa).

It belongs to the bacterial ribosomal protein bL12 family. As to quaternary structure, homodimer. Part of the ribosomal stalk of the 50S ribosomal subunit. Forms a multimeric L10(L12)X complex, where L10 forms an elongated spine to which 2 to 4 L12 dimers bind in a sequential fashion. Binds GTP-bound translation factors.

Functionally, forms part of the ribosomal stalk which helps the ribosome interact with GTP-bound translation factors. Is thus essential for accurate translation. This chain is Large ribosomal subunit protein bL12, found in Buchnera aphidicola subsp. Acyrthosiphon pisum (strain Tuc7).